We begin with the raw amino-acid sequence, 537 residues long: NAD(P)H-quinone oxidoreductase chain 4 3 (537 aa).

The next 13 helical transmembrane spans lie at F6–I26, W36–Y56, L87–W107, L115–D135, L136–I156, F169–F189, A209–F229, S243–I263, F277–F297, M314–L334, Q335–E355, L387–T407, and V417–L437.

This sequence belongs to the complex I subunit 4 family.

The protein localises to the cellular thylakoid membrane. It catalyses the reaction a plastoquinone + NADH + (n+1) H(+)(in) = a plastoquinol + NAD(+) + n H(+)(out). It carries out the reaction a plastoquinone + NADPH + (n+1) H(+)(in) = a plastoquinol + NADP(+) + n H(+)(out). NDH-1 shuttles electrons from NAD(P)H, via FMN and iron-sulfur (Fe-S) centers, to quinones in the respiratory chain. The immediate electron acceptor for the enzyme in this species is believed to be plastoquinone. Couples the redox reaction to proton translocation (for every two electrons transferred, four hydrogen ions are translocated across the cytoplasmic membrane), and thus conserves the redox energy in a proton gradient. The protein is NAD(P)H-quinone oxidoreductase chain 4 3 of Trichormus variabilis (strain ATCC 29413 / PCC 7937) (Anabaena variabilis).